A 145-amino-acid polypeptide reads, in one-letter code: Putative antiporter subunit mnhG2 (145 aa).

The next 3 helical transmembrane spans lie at 11–31 (IAAVMLLLGSFIALISAIGIV), 51–71 (VLLTLIGVLIYFIVNTGFFSV), and 72–92 (RLLLSLVFINLTSPVGMHLVA).

This sequence belongs to the CPA3 antiporters (TC 2.A.63) subunit G family. As to quaternary structure, may form a heterooligomeric complex that consists of seven subunits: mnhA2, mnhB2, mnhC2, mnhD2, mnhE2, mnhF2 and mnhG2.

The protein resides in the cell membrane. In Staphylococcus aureus (strain COL), this protein is Putative antiporter subunit mnhG2 (mnhG2).